The following is a 334-amino-acid chain: Inositol 2-dehydrogenase (334 aa).

This sequence belongs to the Gfo/Idh/MocA family. In terms of assembly, homotetramer.

It catalyses the reaction myo-inositol + NAD(+) = scyllo-inosose + NADH + H(+). Functionally, involved in the oxidation of myo-inositol (MI) to 2-keto-myo-inositol (2KMI or 2-inosose). This Cereibacter sphaeroides (strain ATCC 17023 / DSM 158 / JCM 6121 / CCUG 31486 / LMG 2827 / NBRC 12203 / NCIMB 8253 / ATH 2.4.1.) (Rhodobacter sphaeroides) protein is Inositol 2-dehydrogenase.